Reading from the N-terminus, the 68-residue chain is Cold shock-like protein CspA (68 aa).

The region spanning 4–64 is the CSD domain; that stretch reads GTVKWFNDAK…GPKGLQAQNV (61 aa).

The protein localises to the cytoplasm. In Stigmatella aurantiaca (strain DW4/3-1), this protein is Cold shock-like protein CspA (cspA).